A 103-amino-acid polypeptide reads, in one-letter code: Large ribosomal subunit protein uL24 (103 aa).

Belongs to the universal ribosomal protein uL24 family. As to quaternary structure, part of the 50S ribosomal subunit.

Functionally, one of two assembly initiator proteins, it binds directly to the 5'-end of the 23S rRNA, where it nucleates assembly of the 50S subunit. One of the proteins that surrounds the polypeptide exit tunnel on the outside of the subunit. The polypeptide is Large ribosomal subunit protein uL24 (Actinobacillus pleuropneumoniae serotype 5b (strain L20)).